We begin with the raw amino-acid sequence, 557 residues long: 2-isopropylmalate synthase (557 aa).

The region spanning 33-307 (PIWCSSDLRD…DPQLDFSDID (275 aa)) is the Pyruvate carboxyltransferase domain. Mg(2+)-binding residues include Asp42, His246, His248, and Asn282. A regulatory domain region spans residues 439–557 (ANAPYALVSH…SLSQQQAKAA (119 aa)).

Belongs to the alpha-IPM synthase/homocitrate synthase family. LeuA type 2 subfamily. As to quaternary structure, homodimer. Mg(2+) is required as a cofactor.

It localises to the cytoplasm. It carries out the reaction 3-methyl-2-oxobutanoate + acetyl-CoA + H2O = (2S)-2-isopropylmalate + CoA + H(+). It participates in amino-acid biosynthesis; L-leucine biosynthesis; L-leucine from 3-methyl-2-oxobutanoate: step 1/4. Its function is as follows. Catalyzes the condensation of the acetyl group of acetyl-CoA with 3-methyl-2-oxobutanoate (2-ketoisovalerate) to form 3-carboxy-3-hydroxy-4-methylpentanoate (2-isopropylmalate). The chain is 2-isopropylmalate synthase from Pseudomonas entomophila (strain L48).